A 121-amino-acid chain; its full sequence is Large ribosomal subunit protein uL14 (121 aa).

This sequence belongs to the universal ribosomal protein uL14 family. As to quaternary structure, part of the 50S ribosomal subunit. Forms a cluster with proteins L3 and L19. In the 70S ribosome, L14 and L19 interact and together make contacts with the 16S rRNA in bridges B5 and B8.

Its function is as follows. Binds to 23S rRNA. Forms part of two intersubunit bridges in the 70S ribosome. In Hydrogenobaculum sp. (strain Y04AAS1), this protein is Large ribosomal subunit protein uL14.